The sequence spans 869 residues: MTRTSETTKSPAPELLTQQQAIDSLGKYGYGWADSDVAGASARRGLSEDVVRDISAKKDEPEWMLQARLKALRVFERKPMPRWGSNLDGIDFDNIKYFVRSTEKQAASWDELPEDIRNTYDRLGIPDAEKQRLVAGVAAQYESEVVYHQIRADLKDQGVVFLDTETGLREYPDIFKQYLGTVIPAGDNKFSALNTAVWSGGCLTADARINVKGKGLVSIADVQPGDEVFGVNIGCELERGKVLAKVASGTKPVYEMHVAGRALEATGNHQFLVARRVEEGKRTRWTAVWAPLEEIESGEPIAVARVLPDDSGTIFFSESELDIKNRTRQCLYFPCQNSVDLLWLLGLWLGDGHTAAPHKHMRQVAFSVPAGDPVHHTAIRVVSEQFGANVTVVNCGFIVSSKAFETWLAELGFSGDEKTKRLPAWIYSLPHEHQLALIGGLVDADGWTESSGATMSIAFASRELLEDVRQLAIGCGLYPDGALVERTRSATCRDGRIVTSTSWRLRIQGSLDRVGTRTPGKRGKPVSNKGRRQRYVAAAGLNFSSLSTDTVGFARLKSKTLVGEKPTYDIQVVGLENFVANGIVAHNSFIYVPPGVHVDIPLQAYFRINTENMGQFERTLIIADTGSYVHYVEGCTAPIYKSDSLHSAVVEIIVKPHARVRYTTIQNWSNNVYNLVTKRARVETGATMEWIDGNIGSKVTMKYPAVWMTGEHAKGEVLSVAFAGEGQHQDTGAKMLHLASNTSSNIVSKSVARGGGRTSYRGLVQVNKGAHGSRSSVKCDALLVDTISRSDTYPYVDIREDDVTMGHEATVSKVSENQLFYLMSRGLAEDEAMAMVVRGFVEPIAKELPMEYALELNRLIELQMEGAVG.

The DOD-type homing endonuclease domain occupies 344–477 (LLGLWLGDGH…VRQLAIGCGL (134 aa)).

This sequence belongs to the iron-sulfur cluster assembly SufBD family. In terms of processing, this protein undergoes a protein self splicing that involves a post-translational excision of the intervening region (intein) followed by peptide ligation.

This Mycobacterium leprae (strain TN) protein is Iron-sulfur cluster assembly SufBD family protein ML0593.